Consider the following 217-residue polypeptide: Ras-related protein RABA2d (217 aa).

19–26 (GDSGVGKT) serves as a coordination point for GTP. Positions 41-49 (SKSTIGVEF) match the Effector region motif. GTP is bound by residues 67–71 (DTAGQ), 125–128 (NKAD), and 155–156 (SA). Residues 196 to 217 (GQGTTINVEDTSGAGKRGCCST) are disordered. S-geranylgeranyl cysteine attachment occurs at residues C214 and C215.

This sequence belongs to the small GTPase superfamily. Rab family. In terms of tissue distribution, expressed in root tips.

The protein resides in the endosome membrane. The protein localises to the golgi apparatus. Its subcellular location is the trans-Golgi network membrane. In terms of biological role, intracellular vesicle trafficking and protein transport. This is Ras-related protein RABA2d (RABA2D) from Arabidopsis thaliana (Mouse-ear cress).